The following is a 494-amino-acid chain: GTPase Der (494 aa).

EngA-type G domains are found at residues 3–166 (PVVA…AEQM) and 206–379 (IKLA…RSAT). GTP-binding positions include 9–16 (GRPNVGKS), 56–60 (DTGGI), 118–121 (NKVD), 212–219 (GRPNVGKS), 259–263 (DTAGV), and 324–327 (NKWD). In terms of domain architecture, KH-like spans 380 to 464 (TRVGTSVLTR…PIRIQFQNSE (85 aa)).

Belongs to the TRAFAC class TrmE-Era-EngA-EngB-Septin-like GTPase superfamily. EngA (Der) GTPase family. As to quaternary structure, associates with the 50S ribosomal subunit.

Its function is as follows. GTPase that plays an essential role in the late steps of ribosome biogenesis. This Vibrio cholerae serotype O1 (strain ATCC 39541 / Classical Ogawa 395 / O395) protein is GTPase Der.